Reading from the N-terminus, the 91-residue chain is UPF0358 protein SERP0701 (91 aa).

This sequence belongs to the UPF0358 family.

The chain is UPF0358 protein SERP0701 from Staphylococcus epidermidis (strain ATCC 35984 / DSM 28319 / BCRC 17069 / CCUG 31568 / BM 3577 / RP62A).